The sequence spans 2515 residues: Nonribosomal peptide synthetase tpzA (2515 aa).

The adenylation 1 stretch occupies residues 246–648 (ELATRQPGAQ…GRMGTQVKLR (403 aa)). The Carrier 1 domain maps to 794 to 867 (SEVEHLIHAI…DMATVALKTS (74 aa)). An O-(pantetheine 4'-phosphoryl)serine modification is found at Ser828. A condensation 1 region spans residues 924-1332 (DAYPCSPLQE…IRSVPHITPE (409 aa)). The interval 1357–1758 (RKQSQETPSA…GRMNDQIKLR (402 aa)) is adenylation 2. One can recognise a Carrier 2 domain in the interval 1900–1976 (LATTNEERTL…AILSHLTGRK (77 aa)). Residue Ser1937 is modified to O-(pantetheine 4'-phosphoryl)serine. A condensation 2 region spans residues 2013–2431 (VEDIYPCGPI…LGILPPEEQK (419 aa)). In terms of domain architecture, Carrier 3 spans 2436 to 2512 (PSLSAAVVRL…AMARRSLVVS (77 aa)). Ser2473 is subject to O-(pantetheine 4'-phosphoryl)serine.

This sequence belongs to the NRP synthetase family.

The protein operates within secondary metabolite biosynthesis. Nonribosomal peptide synthetase; part of the gene cluster that mediates the biosynthesis of terreazepine,. The first step of terreazepine biosynthesis is catalyzed by the indoleamine 2,3-dioxygenase tpzB which produces N-formyl-kynurenine through the catabolism of tryptophan. The two-module NRPS tpzA then utilizes anthranilate and kynurenine to assemble terreazepine. The first adenylation domain of tpzA (A1) loads anthranilate onto the T1 domain, while A2 loads kynurenine, generated through spontaneous nonenzymatic deformylation of the tzpB-supplied N-formyl-kynurenine. TpzA produces a 2:1 mixture of S-R enantiomers, which suggests that the A2 domain accepts both D- and L-kynurenine. The peptide bond formation between the tethered amino acids is catalyzed by the first condensation domain (C1) between anthranilate's carbonyl carbon and kynurenine's aliphatic primary amine. The second C domain (C2) catalyzes the final cyclization event between the aromatic amine of kynurenine and the tethered carbonyl carbon, yielding the final terreazepine product. The T3 domain may facilitate the interaction with downstream tailoring enzymes. This is Nonribosomal peptide synthetase tpzA from Aspergillus terreus (strain NIH 2624 / FGSC A1156).